A 440-amino-acid polypeptide reads, in one-letter code: Chromosome partition protein MukF (440 aa).

The segment at L208–I236 is leucine-zipper.

It belongs to the MukF family. In terms of assembly, interacts, and probably forms a ternary complex, with MukE and MukB via its C-terminal region. The complex formation is stimulated by calcium or magnesium. It is required for an interaction between MukE and MukB.

It is found in the cytoplasm. Its subcellular location is the nucleoid. Involved in chromosome condensation, segregation and cell cycle progression. May participate in facilitating chromosome segregation by condensation DNA from both sides of a centrally located replisome during cell division. Not required for mini-F plasmid partitioning. Probably acts via its interaction with MukB and MukE. Overexpression results in anucleate cells. It has a calcium binding activity. The protein is Chromosome partition protein MukF of Shigella boydii serotype 4 (strain Sb227).